The primary structure comprises 110 residues: MSDTLNQLAEVLEARKNAAPDSSYVASLYHKGLNKILEKVGEESVETILAAKDAAASGDCSELIYETADLWFHSLVMLAALGQHPQAVLDELERRFGLSGHAEKAARPKS.

This sequence belongs to the PRA-PH family.

The protein localises to the cytoplasm. It carries out the reaction 1-(5-phospho-beta-D-ribosyl)-ATP + H2O = 1-(5-phospho-beta-D-ribosyl)-5'-AMP + diphosphate + H(+). It functions in the pathway amino-acid biosynthesis; L-histidine biosynthesis; L-histidine from 5-phospho-alpha-D-ribose 1-diphosphate: step 2/9. This is Phosphoribosyl-ATP pyrophosphatase (hisE) from Azotobacter chroococcum mcd 1.